A 101-amino-acid polypeptide reads, in one-letter code: Movement protein (101 aa).

Residues 30–50 traverse the membrane as a helical segment; sequence EVAILSFVALICIYLLYLWVL. The tract at residues 80–101 is disordered; it reads PIPNTLEPTAPVHPGPFVPGQG. A compositionally biased stretch (pro residues) spans 90 to 101; it reads PVHPGPFVPGQG.

Belongs to the mastrevirus movement protein family. In terms of assembly, interacts with the capsid protein (CP). Part of a MP-CP-viral DNA complex.

The protein localises to the host membrane. In terms of biological role, involved in the viral transport within, and between cells. In Avena sativa (Oat), this protein is Movement protein.